A 25-amino-acid polypeptide reads, in one-letter code: Glutamine synthetase 2 isozyme (25 aa).

It belongs to the glutamine synthetase family. As to quaternary structure, homohexamer.

Its subcellular location is the plastid. The protein resides in the chloroplast. It catalyses the reaction L-glutamate + NH4(+) + ATP = L-glutamine + ADP + phosphate + H(+). Its function is as follows. Plays a key role in the nitrogen metabolism of microorganisms, animals and plants. This is Glutamine synthetase 2 isozyme from Emiliania huxleyi (Coccolithophore).